The sequence spans 343 residues: Lactamase-like protein nscB (343 aa).

The Zn(2+) site is built by His118, His120, Asp122, and His123. Residue Asp122 is the Proton donor/acceptor of the active site.

This sequence belongs to the metallo-beta-lactamase superfamily. Zn(2+) is required as a cofactor.

Its pathway is secondary metabolite biosynthesis. Its function is as follows. Lactamase-like protein; part of the gene cluster that mediates the biosynthesis of neosartoricin B, a prenylated anthracenone that probably exhibits T-cell antiproliferative activity, suggestive of a physiological role as an immunosuppressive agent. The non-reducing polyketide synthase nscA probably synthesizes and cyclizes the decaketide backbone. The hydrolase nscB then mediates the product release through hydrolysis followed by spontaneous decarboxylation. The prenyltransferase nscD catalyzes the addition of the dimethylallyl group to the aromatic C5. The FAD-dependent monooxygenase nscC is then responsible for the stereospecific hydroxylation at C2. Neosartoricin B can be converted into two additional compounds neosartoricins C and D. Neosartoricin C is a spirocyclic compound that is cyclized through the attack of C3 hydroxyl on C14, followed by dehydration. On the other hand, neosartoricin D is a further cyclized compound in which attack of C2 on C14 in neosartoricin C results in the formation of the acetal-containing dioxabicyclo-octanone ring. Both of these compounds are novel and possibly represent related metabolites of the gene cluster. This is Lactamase-like protein nscB from Arthroderma otae (strain ATCC MYA-4605 / CBS 113480) (Microsporum canis).